A 199-amino-acid polypeptide reads, in one-letter code: Probable NADH dehydrogenase [ubiquinone] iron-sulfur protein 7, mitochondrial (199 aa).

A mitochondrion-targeting transit peptide spans 1–16; sequence MLSALRTAGALSTRRL. [4Fe-4S] cluster is bound by residues cysteine 74, cysteine 75, cysteine 139, and cysteine 169.

The protein belongs to the complex I 20 kDa subunit family. In terms of assembly, complex I is composed of 45 different subunits This is a component of the iron-sulfur (IP) fragment of the enzyme. It depends on [4Fe-4S] cluster as a cofactor.

It localises to the mitochondrion. It catalyses the reaction a ubiquinone + NADH + 5 H(+)(in) = a ubiquinol + NAD(+) + 4 H(+)(out). In terms of biological role, core subunit of the mitochondrial membrane respiratory chain NADH dehydrogenase (Complex I) that is believed to belong to the minimal assembly required for catalysis. Complex I functions in the transfer of electrons from NADH to the respiratory chain. The immediate electron acceptor for the enzyme is believed to be ubiquinone. The polypeptide is Probable NADH dehydrogenase [ubiquinone] iron-sulfur protein 7, mitochondrial (Caenorhabditis briggsae).